Consider the following 703-residue polypeptide: Elongation factor G 1 (703 aa).

One can recognise a tr-type G domain in the interval 8 to 290; the sequence is ERYRNIGISA…AVIDFLPSPV (283 aa). GTP contacts are provided by residues 17–24, 88–92, and 142–145; these read AHIDAGKT, DTPGH, and NKMD.

The protein belongs to the TRAFAC class translation factor GTPase superfamily. Classic translation factor GTPase family. EF-G/EF-2 subfamily.

The protein localises to the cytoplasm. Its function is as follows. Catalyzes the GTP-dependent ribosomal translocation step during translation elongation. During this step, the ribosome changes from the pre-translocational (PRE) to the post-translocational (POST) state as the newly formed A-site-bound peptidyl-tRNA and P-site-bound deacylated tRNA move to the P and E sites, respectively. Catalyzes the coordinated movement of the two tRNA molecules, the mRNA and conformational changes in the ribosome. The protein is Elongation factor G 1 of Cupriavidus metallidurans (strain ATCC 43123 / DSM 2839 / NBRC 102507 / CH34) (Ralstonia metallidurans).